The primary structure comprises 242 residues: Pyridoxine 5'-phosphate synthase (242 aa).

3-amino-2-oxopropyl phosphate is bound at residue N6. Residue 8–9 (DH) coordinates 1-deoxy-D-xylulose 5-phosphate. A 3-amino-2-oxopropyl phosphate-binding site is contributed by R17. Catalysis depends on H42, which acts as the Proton acceptor. Residues R44 and H49 each contribute to the 1-deoxy-D-xylulose 5-phosphate site. The Proton acceptor role is filled by E69. T99 is a 1-deoxy-D-xylulose 5-phosphate binding site. Catalysis depends on H190, which acts as the Proton donor. Residues G191 and 212 to 213 (GH) contribute to the 3-amino-2-oxopropyl phosphate site.

It belongs to the PNP synthase family. As to quaternary structure, homooctamer; tetramer of dimers.

Its subcellular location is the cytoplasm. The enzyme catalyses 3-amino-2-oxopropyl phosphate + 1-deoxy-D-xylulose 5-phosphate = pyridoxine 5'-phosphate + phosphate + 2 H2O + H(+). It participates in cofactor biosynthesis; pyridoxine 5'-phosphate biosynthesis; pyridoxine 5'-phosphate from D-erythrose 4-phosphate: step 5/5. Its function is as follows. Catalyzes the complicated ring closure reaction between the two acyclic compounds 1-deoxy-D-xylulose-5-phosphate (DXP) and 3-amino-2-oxopropyl phosphate (1-amino-acetone-3-phosphate or AAP) to form pyridoxine 5'-phosphate (PNP) and inorganic phosphate. This chain is Pyridoxine 5'-phosphate synthase, found in Neisseria meningitidis serogroup B (strain ATCC BAA-335 / MC58).